The chain runs to 359 residues: Aflatoxin B1 aldehyde reductase member 2 (359 aa).

Residues 1–38 (MLSAASRVVSRAAVHCALRSPPPEARALAMSRPPPPRV) constitute a mitochondrion transit peptide. Serine 40 carries the post-translational modification Phosphoserine. Aspartate 72 is a binding site for NADP(+). Catalysis depends on tyrosine 77, which acts as the Proton donor. Lysine 128 carries the N6-acetyllysine modification. Histidine 141 contributes to the substrate binding site. Residues 171-172 (SN), glutamine 197, 226-236 (NPLAGGLLTGK), and arginine 250 contribute to the NADP(+) site. At lysine 236 the chain carries N6-succinyllysine. Serine 255 bears the Phosphoserine mark. Substrate is bound by residues tyrosine 260 and arginine 263. 318–326 (SSLEQLEQN) lines the NADP(+) pocket. Position 359 (arginine 359) interacts with substrate.

Belongs to the aldo/keto reductase family. Aldo/keto reductase 2 subfamily. As to quaternary structure, homodimer. Detected in brain, liver, small intestine and testis, and at lower levels in heart, prostate, skeletal muscle and spleen. Detected in kidney proximal and distal tubules, endothelial cells lining the Bowman's capsules and some cysts. Detected at low levels in lung and pancreas (at protein level). Widely expressed.

Its subcellular location is the mitochondrion. The protein resides in the golgi apparatus. It localises to the cytoplasm. The enzyme catalyses 4-hydroxybutanoate + NADP(+) = succinate semialdehyde + NADPH + H(+). Its function is as follows. Catalyzes the NADPH-dependent reduction of succinic semialdehyde to gamma-hydroxybutyrate. May have an important role in producing the neuromodulator gamma-hydroxybutyrate (GHB). Has broad substrate specificity. Has NADPH-dependent aldehyde reductase activity towards 2-carboxybenzaldehyde, 2-nitrobenzaldehyde and pyridine-2-aldehyde (in vitro). Can reduce 1,2-naphthoquinone and 9,10-phenanthrenequinone (in vitro). Can reduce the dialdehyde protein-binding form of aflatoxin B1 (AFB1) to the non-binding AFB1 dialcohol. May be involved in protection of liver against the toxic and carcinogenic effects of AFB1, a potent hepatocarcinogen. The protein is Aflatoxin B1 aldehyde reductase member 2 (AKR7A2) of Homo sapiens (Human).